Consider the following 466-residue polypeptide: MTASQDFVVKDISLADWGRKELDIAETEMPGLMAAREEFGKSQPLKGARISGSLHMTIQTAVLIETLKVLGAEVRWASCNIFSTQDHAAAAIAATGTPVFAVKGETLEEYWTYTDQIFQWPDGEPSNMILDDGGDATMYILIGARAEAGEDVLSNPQSEEEEVLFAQIKKRMAATPGFFTKQRAAIKGVTEETTTGVNRLYQLQKKGLLPFPAINVNDSVTKSKFDNKYGCKESLVDGIRRGTDVMMAGKVAVVCGYGDVGKGSAQSLAGAGARVKVTEVDPICALQAAMDGFEVVTLDDAASTADIVVTTTGNKDVITIDHMRKMKDMCIVGNIGHFDNEIQVAALRNLKWTNVKPQVDLIEFPDGKRLILLSEGRLLNLGNATGHPSFVMSASFTNQVLGQIELFTRTDAYKNEVYVLPKHLDEKVARLHLDKLGAKLTVLSEEQAAYIGVTPQGPFKSEHYRY.

Residues Thr57, Asp132, and Glu192 each coordinate substrate. NAD(+) is bound at residue 193-195 (TTT). Substrate contacts are provided by Lys222 and Asp226. NAD(+)-binding positions include Asn227, 256–261 (GYGDVG), Glu279, Asn314, 335–337 (IGH), and Asn380.

The protein belongs to the adenosylhomocysteinase family. The cofactor is NAD(+).

It is found in the cytoplasm. It catalyses the reaction S-adenosyl-L-homocysteine + H2O = L-homocysteine + adenosine. Its pathway is amino-acid biosynthesis; L-homocysteine biosynthesis; L-homocysteine from S-adenosyl-L-homocysteine: step 1/1. Its function is as follows. May play a key role in the regulation of the intracellular concentration of adenosylhomocysteine. This chain is Adenosylhomocysteinase, found in Brucella abortus (strain S19).